Consider the following 381-residue polypeptide: Cytochrome b (381 aa).

The next 4 helical transmembrane spans lie at 33–53, 77–98, 113–133, and 178–198; these read FGSL…FLAM, WLLR…FLHV, WNIG…GYVL, and FFAF…VHLL. Residues His-83 and His-97 each coordinate heme b. His-182 and His-196 together coordinate heme b. His-201 serves as a coordination point for a ubiquinone. Transmembrane regions (helical) follow at residues 226 to 246, 288 to 308, 320 to 340, and 347 to 367; these read IKDA…GLFS, LGGV…PLLH, IFQT…WIGG, and FIII…ALMP.

Belongs to the cytochrome b family. As to quaternary structure, the cytochrome bc1 complex contains 11 subunits: 3 respiratory subunits (MT-CYB, CYC1 and UQCRFS1), 2 core proteins (UQCRC1 and UQCRC2) and 6 low-molecular weight proteins (UQCRH/QCR6, UQCRB/QCR7, UQCRQ/QCR8, UQCR10/QCR9, UQCR11/QCR10 and a cleavage product of UQCRFS1). This cytochrome bc1 complex then forms a dimer. Requires heme b as cofactor.

The protein resides in the mitochondrion inner membrane. Functionally, component of the ubiquinol-cytochrome c reductase complex (complex III or cytochrome b-c1 complex) that is part of the mitochondrial respiratory chain. The b-c1 complex mediates electron transfer from ubiquinol to cytochrome c. Contributes to the generation of a proton gradient across the mitochondrial membrane that is then used for ATP synthesis. The polypeptide is Cytochrome b (MT-CYB) (Dasykaluta rosamondae (Little red marsupial mouse)).